We begin with the raw amino-acid sequence, 651 residues long: Tudor domain-containing protein 3 (651 aa).

The region spanning 193 to 233 (LVDEKALKHITEMGFSKEASRQALMDNGNNLEAALNVLLTS) is the UBA domain. 3 disordered regions span residues 234 to 271 (NKQK…SAPS), 287 to 369 (EEPK…VSEV), and 381 to 450 (YSRY…TSIP). Ser256 is subject to Phosphoserine. The segment covering 291–312 (SQPQQLHQGQYRSSNTEQNGVK) has biased composition (polar residues). The segment covering 313-338 (DNNHLRHPPRNDTRQPRNEKPPRFQR) has biased composition (basic and acidic residues). Position 345 is a phosphoserine (Ser345). Lys470 is covalently cross-linked (Glycyl lysine isopeptide (Lys-Gly) (interchain with G-Cter in SUMO2)). Residues 555-615 (MWKPGDECFA…KPIQTEAWEE (61 aa)) form the Tudor domain. Residues 624–633 (EFRRGGDGQP) are compositionally biased toward basic and acidic residues. A disordered region spans residues 624–651 (EFRRGGDGQPRRSTRPTQQFYQPPRARN). The segment at 631-651 (GQPRRSTRPTQQFYQPPRARN) is EBM motif; may mediate interaction with the EJC.

As to quaternary structure, component of mRNA stress granules. Interacts with FMR1, FXR1, FXR2, EWSR1, FUS, SERBP1, EEF1A1 and DDX3X or DDX3Y, and with the small nuclear ribonucleoprotein-associated proteins SNRPB and SNRPN. Interacts with 'Lys-48'-linked tetra-ubiquitin, but not with monoubiquitin or 'Lys-63'-linked ubiquitin chains. May interact with the exon junction complex (EJC) composed at least of CASC3, EIF4A3, MAGOH and RBM8A. Interacts with POLR2A (via the C-terminal domain (CTD)). In terms of processing, probably cleaved by enteroviral 2A proteinase. Detected in heart, brain, placenta, lung, liver, skeletal muscle, kidney and pancreas.

The protein localises to the cytoplasm. It is found in the nucleus. Functionally, scaffolding protein that specifically recognizes and binds dimethylarginine-containing proteins. Plays a role in the regulation of translation of target mRNAs by binding Arg/Gly-rich motifs (GAR) in dimethylarginine-containing proteins. In nucleus, acts as a coactivator: recognizes and binds asymmetric dimethylation on the core histone tails associated with transcriptional activation (H3R17me2a and H4R3me2a) and recruits proteins at these arginine-methylated loci. In cytoplasm, acts as an antiviral factor that participates in the assembly of stress granules together with G3BP1. The sequence is that of Tudor domain-containing protein 3 (TDRD3) from Homo sapiens (Human).